The sequence spans 50 residues: uncharacterized protein (50 aa).

A helical transmembrane segment spans residues 5-19 (IIIIVIVIIIFFFYL). Positions 19–50 (LKQKKLTNCETQVVKVQKDIDEINLKLKKLNK) form a coiled coil.

The protein resides in the membrane. This is an uncharacterized protein from Acheta domesticus (House cricket).